The chain runs to 225 residues: Ribose-5-phosphate isomerase A (225 aa).

Residues 32–35 (TGST), 85–88 (DGAD), and 98–101 (KGGG) contribute to the substrate site. The Proton acceptor role is filled by Glu-107. Lys-125 is a substrate binding site.

It belongs to the ribose 5-phosphate isomerase family. As to quaternary structure, homodimer.

It carries out the reaction aldehydo-D-ribose 5-phosphate = D-ribulose 5-phosphate. The protein operates within carbohydrate degradation; pentose phosphate pathway; D-ribose 5-phosphate from D-ribulose 5-phosphate (non-oxidative stage): step 1/1. In terms of biological role, catalyzes the reversible conversion of ribose-5-phosphate to ribulose 5-phosphate. The protein is Ribose-5-phosphate isomerase A of Marinobacter nauticus (strain ATCC 700491 / DSM 11845 / VT8) (Marinobacter aquaeolei).